A 602-amino-acid polypeptide reads, in one-letter code: Elongation factor 4 (602 aa).

The tr-type G domain maps to 7–189; sequence SKIRNFCIIA…AIVRRVPPPQ (183 aa). Residues 19–24 and 136–139 contribute to the GTP site; these read DHGKST and NKVD.

This sequence belongs to the TRAFAC class translation factor GTPase superfamily. Classic translation factor GTPase family. LepA subfamily.

It localises to the cell inner membrane. It carries out the reaction GTP + H2O = GDP + phosphate + H(+). Functionally, required for accurate and efficient protein synthesis under certain stress conditions. May act as a fidelity factor of the translation reaction, by catalyzing a one-codon backward translocation of tRNAs on improperly translocated ribosomes. Back-translocation proceeds from a post-translocation (POST) complex to a pre-translocation (PRE) complex, thus giving elongation factor G a second chance to translocate the tRNAs correctly. Binds to ribosomes in a GTP-dependent manner. The polypeptide is Elongation factor 4 (Prochlorococcus marinus (strain MIT 9215)).